A 325-amino-acid polypeptide reads, in one-letter code: tRNA N6-adenosine threonylcarbamoyltransferase (325 aa).

Fe cation is bound by residues His-110 and His-114. Residues 133 to 137 (MVSGG), Asp-165, Gly-178, and Asn-268 each bind substrate. Asp-296 provides a ligand contact to Fe cation.

The protein belongs to the KAE1 / TsaD family. The cofactor is Fe(2+).

The protein localises to the cytoplasm. The catalysed reaction is L-threonylcarbamoyladenylate + adenosine(37) in tRNA = N(6)-L-threonylcarbamoyladenosine(37) in tRNA + AMP + H(+). Its function is as follows. Required for the formation of a threonylcarbamoyl group on adenosine at position 37 (t(6)A37) in tRNAs that read codons beginning with adenine. Is involved in the transfer of the threonylcarbamoyl moiety of threonylcarbamoyl-AMP (TC-AMP) to the N6 group of A37, together with TsaE and TsaB. TsaD likely plays a direct catalytic role in this reaction. The chain is tRNA N6-adenosine threonylcarbamoyltransferase from Thermosipho melanesiensis (strain DSM 12029 / CIP 104789 / BI429).